A 261-amino-acid polypeptide reads, in one-letter code: Src-like-adapter 2 (261 aa).

The span at 1-10 (MGSLPSRRKS) shows a compositional bias: basic residues. The interval 1–31 (MGSLPSRRKSLPSPSLSSSVQGQGPVTMEAE) is disordered. The N-myristoyl glycine moiety is linked to residue G2. In terms of domain architecture, SH3 spans 32–92 (RSKATAVALG…PSVHVAKVSH (61 aa)). Residues 94–191 (WLYEGLSREK…DICCLLKEPC (98 aa)) enclose the SH2 domain. Residues 195 to 261 (RAGPLPGKDI…NDEAVSLDDA (67 aa)) form an SLA C-terminal region.

As to quaternary structure, interacts (via SH2 domain) with ZAP70 (phosphorylated) and CD3Z (phosphorylated). Interacts (via SH2 domain) with CSF1R (phosphorylated). Interacts (via its C-terminal domain) with CBL (phosphorylated). Post-translationally, phosphorylated by CSF1R. As to expression, predominantly expressed in immune system, with highest levels in peripheral blood leukocytes. Expressed in spleen, thymus and lymph nodes. Expressed in T-cells as well as in monocytes, and at low level in B-cells. Also detected in placenta, prostate, skin, retina and colon.

It localises to the cytoplasm. It is found in the cell membrane. The protein resides in the cytoplasmic vesicle. Its function is as follows. Adapter protein, which negatively regulates T-cell receptor (TCR) signaling. Inhibits T-cell antigen-receptor induced activation of nuclear factor of activated T-cells. May act by linking signaling proteins such as ZAP70 with CBL, leading to a CBL dependent degradation of signaling proteins. The chain is Src-like-adapter 2 (SLA2) from Homo sapiens (Human).